We begin with the raw amino-acid sequence, 2327 residues long: Voltage-dependent N-type calcium channel subunit alpha-1B (2327 aa).

The disordered stretch occupies residues 1 to 37 (MVRFGDELGGRYGGTGGGERARGGGAGGAGGPGQGGL). Over 1–90 (MVRFGDELGG…DNVVRKYAKR (90 aa)) the chain is Cytoplasmic. Gly residues predominate over residues 10-37 (GRYGGTGGGERARGGGAGGAGGPGQGGL). An Omega-N-methylarginine modification is found at R22. One copy of the I repeat lies at 82–359 (NVVRKYAKRI…LVLGVLSGEF (278 aa)). Residues 91 to 114 (ITEWPPFEYMILATIIANCIVLAL) traverse the membrane as a helical segment. At 115–131 (EQHLPDGDKTPMSERLD) the chain is on the extracellular side. Residues 132–152 (DTEPYFIGIFCFEAGIKIIAL) traverse the membrane as a helical segment. Topologically, residues 153 to 163 (GFVFHKGSYLR) are cytoplasmic. The helical transmembrane segment at 164 to 182 (NGWNVMDFVVVLTGILATA) threads the bilayer. Over 183–187 (GTDFD) the chain is Extracellular. A helical membrane pass occupies residues 188–211 (LRTLRAVRVLRPLKLVSGIPSLQV). The Cytoplasmic portion of the chain corresponds to 212–221 (VLKSIMKAMV). Residues 222–244 (PLLQIGLLLFFAILMFAIIGLEF) form a helical membrane-spanning segment. Residues 245-331 (YMGKFHKACF…NTNDAAGNTW (87 aa)) are Extracellular-facing. An N-linked (GlcNAc...) asparagine glycan is attached at N256. The chain crosses the membrane as a helical span at residues 332 to 356 (NWLYFIPLIIIGSFFMLNLVLGVLS). Topologically, residues 357–482 (GEFAKERERV…FFIRRMVKAQ (126 aa)) are cytoplasmic. The binding to the beta subunit stretch occupies residues 379-396 (QQIERELNGYLEWIFKAE). Residue S411 is modified to Phosphoserine. 451–458 (ASLKSGKT) serves as a coordination point for ATP. The II repeat unit spans residues 468–712 (EKMFRFFIRR…VFLAIAVDNL (245 aa)). Residues 483 to 501 (SFYWVVLCVVALNTLCVAM) form a helical membrane-spanning segment. Topologically, residues 502 to 511 (VHYNQPQRLT) are extracellular. Residues 512-534 (TALYFAEFVFLGLFLTEMSLKMY) form a helical membrane-spanning segment. At 535–544 (GLGPRSYFRS) the chain is on the cytoplasmic side. An a 1,2-diacyl-sn-glycero-3-phospho-(1D-myo-inositol-4,5-bisphosphate)-binding site is contributed by S544. A helical membrane pass occupies residues 545–566 (SFNCFDFGVIVGSIFEVVWAAI). Over 567–573 (KPGTSFG) the chain is Extracellular. The chain crosses the membrane as a helical span at residues 574–586 (ISVLRALRLLRIF). Residues R584 and K587 each coordinate a 1,2-diacyl-sn-glycero-3-phospho-(1D-myo-inositol-4,5-bisphosphate). At 587-604 (KVTKYWNSLRNLVVSLLN) the chain is on the cytoplasmic side. The helical transmembrane segment at 605 to 630 (SMKSIISLLFLLFLFIVVFALLGMQL) threads the bilayer. At 631 to 682 (FGGQFNFQDETPTTNFDTFPAAILTVFQILTGEDWNAVMYHGIESQGGVSKG) the chain is on the extracellular side. Residues 683–709 (MFSSFYFIVLTLFGNYTLLNVFLAIAV) traverse the membrane as a helical segment. Topologically, residues 710–1140 (DNLANAQELT…FCHYIVTMRY (431 aa)) are cytoplasmic. Phosphoserine is present on residues S745, S748, and S783. 2 disordered regions span residues 802-1015 (TRHV…KEPH) and 1042-1066 (EQPEDADNQRNVTRMGSQPSDPSTT). 5 stretches are compositionally biased toward basic and acidic residues: residues 805–826 (VRPDMKTHMDRPLVVEPGRDGL), 869–885 (EQDRTESTETGAREERA), 914–924 (GSPEEATEREP), 961–972 (GPREAENNEEPT), and 988–1015 (PEREAAEKESNAVEGDKETRNHQPKEPH). Positions 1050–1066 (QRNVTRMGSQPSDPSTT) are enriched in polar residues. S1058 carries the post-translational modification Phosphoserine. The III repeat unit spans residues 1126 to 1412 (NLLRRFCHYI…IFVALIIITF (287 aa)). The chain crosses the membrane as a helical span at residues 1141–1159 (FEMVILVVIALSSIALAAE). The Extracellular segment spans residues 1160–1167 (DPVRTDSF). The helical transmembrane segment at 1168–1192 (RNNALKYMDYIFTGVFTFEMVIKMI) threads the bilayer. Topologically, residues 1193–1206 (DLGLLLHPGAYFRD) are cytoplasmic. The helical transmembrane segment at 1207–1231 (LWNILDFIVVSGALVAFAFSSFMGG) threads the bilayer. Residues 1232–1237 (SKGKDI) lie on the Extracellular side of the membrane. The chain crosses the membrane as a helical span at residues 1238-1258 (NTIKSLRVLRVLRPLKTIKRL). The Cytoplasmic segment spans residues 1259-1276 (PKLKAVFDCVVNSLKNVL). Residues 1277 to 1296 (NILIVYMLFMFIFAVIAVQL) form a helical membrane-spanning segment. Over 1297–1383 (FKGKFFYCTD…EQGPSPGFRM (87 aa)) the chain is Extracellular. A helical transmembrane segment spans residues 1384–1409 (ELSIFYVVYFVVFPFFFVNIFVALII). The Cytoplasmic segment spans residues 1410 to 1464 (ITFQEQGDKVMSECSLEKNERACIDFAISAKPLTRYMPQNKQSFQYKTWTFVVSP). The IV repeat unit spans residues 1449-1702 (NKQSFQYKTW…LFVAVIMDNF (254 aa)). Residues 1465-1483 (PFEYFIMAMIALNTVVLMM) form a helical membrane-spanning segment. Residues 1484–1491 (KFYDAPYE) are Extracellular-facing. A helical membrane pass occupies residues 1492–1516 (YELMLKCLNIVFTSMFSMECILKII). The Cytoplasmic portion of the chain corresponds to 1517 to 1526 (AFGVLNYFRD). The chain crosses the membrane as a helical span at residues 1527-1548 (AWNVFDFVTVLGSITDILVTEI). Topologically, residues 1549–1554 (ANNFIN) are extracellular. N1554 carries an N-linked (GlcNAc...) asparagine glycan. The chain crosses the membrane as a helical span at residues 1555–1573 (LSFLRLFRAARLIKLLRQG). The Cytoplasmic portion of the chain corresponds to 1574 to 1592 (YTIRILLWTFVQSFKALPY). A helical transmembrane segment spans residues 1593 to 1612 (VCLLIAMLFFIYAIIGMQVF). The Extracellular portion of the chain corresponds to 1613–1674 (GNIALDDDTS…ANASECGSDF (62 aa)). Residue N1666 is glycosylated (N-linked (GlcNAc...) asparagine). Residues 1675-1698 (AYFYFVSFIFLCSFLMLNLFVAVI) form a helical membrane-spanning segment. The Cytoplasmic portion of the chain corresponds to 1699–2327 (MDNFEYLTRD…YHHPDQDHWC (629 aa)). An EF-hand domain is found at 1715–1750 (HHLDEFIRVWAEYDPAACGRISYNDMFEMLKHMSPP). Ca(2+) contacts are provided by D1728, R1734, and D1739. Residues 1972 to 2193 (TLRGPDGEPQ…TPRPSITYKT (222 aa)) are disordered. The span at 2039 to 2053 (SHHHHHRCHRRRDKK) shows a compositional bias: basic residues. S2056 is subject to Phosphoserine. Basic and acidic residues predominate over residues 2088 to 2104 (CRRDRKQERGRSQERRQ). 2 stretches are compositionally biased toward polar residues: residues 2131-2141 (PSLSSHPTSPT) and 2152-2168 (GSGSVNGSPLMSTSGAS). S2212, S2221, and S2244 each carry phosphoserine. 2 disordered regions span residues 2230–2249 (EPLSQPLAPGSRIGSDPYLG) and 2273–2292 (ATNSGRSSRTSYVSSLTSQS). The segment covering 2276 to 2292 (SGRSSRTSYVSSLTSQS) has biased composition (low complexity).

The protein belongs to the calcium channel alpha-1 subunit (TC 1.A.1.11) family. CACNA1B subfamily. In terms of assembly, multisubunit complex consisting of alpha-1, alpha-2, beta and delta subunits in a 1:1:1:1 ratio. The channel activity is directed by the pore-forming and voltage-sensitive alpha-1 subunit. In many cases, this subunit is sufficient to generate voltage-sensitive calcium channel activity. The auxiliary subunits beta and alpha-2/delta linked by a disulfide bridge regulate the channel activity. Interacts with RIMS1. Interacts with FMR1 (via C-terminus); this interaction induces a decrease in the number of presynaptic functional CACNA1B channels at the cell surface. Post-translationally, phosphorylated in vitro by CaM-kinase II, PKA, PKC and CGPK. In terms of tissue distribution, widespread expression throughout the brain. Highest levels in pyramidal cell layers C1, C2 and C3 of the hippocampus, in the dentate gyrus, in the cortex layers 2 et 4, in the subiculum and the habenula.

The protein localises to the membrane. The enzyme catalyses Ca(2+)(in) = Ca(2+)(out). Its activity is regulated as follows. Is specifically blocked by omega-conotoxin GVIA. Is specifically blocked by omega-conotoxin MVIIA (ziconotide). Is insensitive to dihydropyridines (DHP). Functionally, voltage-sensitive calcium channels (VSCC) mediate the entry of calcium ions into excitable cells and are also involved in a variety of calcium-dependent processes, including muscle contraction, hormone or neurotransmitter release, gene expression, cell motility, cell division and cell death. This alpha-1B subunit gives rise to N-type calcium currents. N-type calcium channels belong to the 'high-voltage activated' (HVA) group. They are involved in pain signaling. Calcium channels containing alpha-1B subunit may play a role in directed migration of immature neurons. Mediates Ca(2+) release probability at hippocampal neuronal soma and synaptic terminals. The protein is Voltage-dependent N-type calcium channel subunit alpha-1B (Cacna1b) of Mus musculus (Mouse).